Here is a 407-residue protein sequence, read N- to C-terminus: L-cysteine:1D-myo-inositol 2-amino-2-deoxy-alpha-D-glucopyranoside ligase (407 aa).

Cysteine 43 serves as a coordination point for Zn(2+). L-cysteinyl-5'-AMP-binding positions include 43-46 (CGIT), threonine 58, and 81-83 (NAT). A 'HIGH' region motif is present at residues 45–55 (ITPYDATHLGH). A 'ERGGDP' region motif is present at residues 183 to 188 (QRGGDP). Residue tryptophan 223 coordinates L-cysteinyl-5'-AMP. Cysteine 227 lines the Zn(2+) pocket. An L-cysteinyl-5'-AMP-binding site is contributed by 245 to 247 (GSD). Histidine 252 contributes to the Zn(2+) binding site. Valine 279 contributes to the L-cysteinyl-5'-AMP binding site. The 'KMSKS' region signature appears at 285–289 (KMSKS).

This sequence belongs to the class-I aminoacyl-tRNA synthetase family. MshC subfamily. In terms of assembly, monomer. It depends on Zn(2+) as a cofactor.

It catalyses the reaction 1D-myo-inositol 2-amino-2-deoxy-alpha-D-glucopyranoside + L-cysteine + ATP = 1D-myo-inositol 2-(L-cysteinylamino)-2-deoxy-alpha-D-glucopyranoside + AMP + diphosphate + H(+). Its function is as follows. Catalyzes the ATP-dependent condensation of GlcN-Ins and L-cysteine to form L-Cys-GlcN-Ins. The protein is L-cysteine:1D-myo-inositol 2-amino-2-deoxy-alpha-D-glucopyranoside ligase of Streptosporangium roseum (strain ATCC 12428 / DSM 43021 / JCM 3005 / KCTC 9067 / NCIMB 10171 / NRRL 2505 / NI 9100).